Consider the following 81-residue polypeptide: Cytochrome b559 subunit alpha (81 aa).

A helical membrane pass occupies residues 21–35; the sequence is VIHSITIPMLFVAGW. His23 provides a ligand contact to heme.

This sequence belongs to the PsbE/PsbF family. As to quaternary structure, heterodimer of an alpha subunit and a beta subunit. PSII is composed of 1 copy each of membrane proteins PsbA, PsbB, PsbC, PsbD, PsbE, PsbF, PsbH, PsbI, PsbJ, PsbK, PsbL, PsbM, PsbT, PsbX, PsbY, PsbZ, Psb30/Ycf12, peripheral proteins PsbO, CyanoQ (PsbQ), PsbU, PsbV and a large number of cofactors. It forms dimeric complexes. The cofactor is heme b.

It localises to the cellular thylakoid membrane. This b-type cytochrome is tightly associated with the reaction center of photosystem II (PSII). PSII is a light-driven water:plastoquinone oxidoreductase that uses light energy to abstract electrons from H(2)O, generating O(2) and a proton gradient subsequently used for ATP formation. It consists of a core antenna complex that captures photons, and an electron transfer chain that converts photonic excitation into a charge separation. This Gloeothece citriformis (strain PCC 7424) (Cyanothece sp. (strain PCC 7424)) protein is Cytochrome b559 subunit alpha.